Reading from the N-terminus, the 356-residue chain is Dynein axonemal heavy chain 12 (356 aa).

ANK repeat units lie at residues 17–46 (DSSSILLEAASGGNPDSVTLLLEYGADANV), 50–81 (SGHLPIHVAADRGHLLALKTLVPVTDFAAIKR), 82–111 (SGISPIHCAAAGAHPKCLELLIQAGFDVNF), 124–153 (HRKSALYFAVSNGDLSSVKLLLSAGAMPNQ), 154–183 (DPVNCLQIALRMGNYELVSLLLRHGANVNY), and 185–218 (CRVNPLHFPSALQYTLKDEVMLRMLLNYGYDTEL). The 56-residue stretch at 290-345 (WSEIHFILTNPRSLKHLCRLKIRKCMGRLRLRCPVFMSFLPLPSRLKAYVLYKEYD) folds into the SOCS box domain.

Belongs to the dynein heavy chain family. As to quaternary structure, consists of at least two heavy chains and a number of intermediate and light chains.

The protein resides in the cytoplasm. It localises to the cytoskeleton. The protein localises to the cilium axoneme. It participates in protein modification; protein ubiquitination. Force generating protein of respiratory cilia. Produces force towards the minus ends of microtubules. Dynein has ATPase activity; the force-producing power stroke is thought to occur on release of ADP. Involved in sperm motility; implicated in sperm flagellar assembly. Functionally, may be a substrate-recognition component of a SCF-like ECS (Elongin-Cullin-SOCS-box protein) E3 ubiquitin-protein ligase complex which mediates the ubiquitination and subsequent proteasomal degradation of target proteins. This is Dynein axonemal heavy chain 12 (DNAH12) from Bos taurus (Bovine).